Here is a 144-residue protein sequence, read N- to C-terminus: 3-hydroxyacyl-[acyl-carrier-protein] dehydratase FabZ (144 aa).

H48 is a catalytic residue.

This sequence belongs to the thioester dehydratase family. FabZ subfamily.

The protein localises to the cytoplasm. The enzyme catalyses a (3R)-hydroxyacyl-[ACP] = a (2E)-enoyl-[ACP] + H2O. Involved in unsaturated fatty acids biosynthesis. Catalyzes the dehydration of short chain beta-hydroxyacyl-ACPs and long chain saturated and unsaturated beta-hydroxyacyl-ACPs. This chain is 3-hydroxyacyl-[acyl-carrier-protein] dehydratase FabZ, found in Listeria innocua serovar 6a (strain ATCC BAA-680 / CLIP 11262).